We begin with the raw amino-acid sequence, 456 residues long: Alcohol acyl transferase 1 allele GSc (456 aa).

Catalysis depends on proton acceptor residues His-165 and Asn-386.

Belongs to the plant acyltransferase family. As to expression, expressed at very low levels in the skin of ripe fruit.

Involved in the biosynthesis of volatile esters which confer ripe apple fruit flavor. Alcohol acyl transferase that can use a wide range of alcohols as substrate to produce esters. In Malus domestica (Apple), this protein is Alcohol acyl transferase 1 allele GSc.